Here is a 163-residue protein sequence, read N- to C-terminus: Nucleotide-binding protein BA_1166 (163 aa).

This sequence belongs to the YajQ family.

Functionally, nucleotide-binding protein. This is Nucleotide-binding protein BA_1166 from Bacillus anthracis.